We begin with the raw amino-acid sequence, 172 residues long: C-phycocyanin beta chain (172 aa).

Residues asparagine 35, aspartate 39, asparagine 72, arginine 77, cysteine 82, 82-88 (CLRDMEI), 149-151 (TTG), and cysteine 153 contribute to the (2R,3E)-phycocyanobilin site. Residue asparagine 72 is modified to N4-methylasparagine.

Belongs to the phycobiliprotein family. In terms of assembly, heterodimer of an alpha and a beta subunit. Dimers further assemble into trimers and the trimers into hexamers. The basic functional unit of phycobiliproteins is a ring-shaped hexamer formed from two back-to-back trimers contacting via the alpha chain subunits. The trimers are composed of alpha/beta subunit heterodimers arranged around a three-fold axis of symmetry. The phycoerythrins also contain a gamma subunit which is located in the center of the hexamer. Post-translationally, contains two covalently linked phycocyanobilin chromophores.

The protein localises to the plastid. It is found in the chloroplast thylakoid membrane. Functionally, light-harvesting photosynthetic tetrapyrrole chromophore-protein from the phycobiliprotein complex (phycobilisome, PBS). Phycocyanin is the major phycobiliprotein in the PBS rod. In Galdieria sulphuraria (Red alga), this protein is C-phycocyanin beta chain (cpcB).